Reading from the N-terminus, the 245-residue chain is Collagen triple helix repeat-containing protein 1 (245 aa).

The first 32 residues, 1–32 (MHPQGRAASPQLLLGLFLVLLLLLQLSAPSSA), serve as a signal peptide directing secretion. One can recognise a Collagen-like domain in the interval 59–92 (QGPAGVPGRDGSPGANGIPGTPGIPGRDGFKGEK). The disordered stretch occupies residues 64–87 (VPGRDGSPGANGIPGTPGIPGRDG). Asn188 carries N-linked (GlcNAc...) asparagine glycosylation.

In terms of processing, N-glycosylated. Expressed after injury in the carotid arteries (at protein level). Expressed in brain, lung, and after injury in fibroblasts of the adventitia and the neointima of the arteries.

The protein resides in the secreted. It localises to the extracellular space. It is found in the extracellular matrix. Functionally, its overexpression in smooth muscle cell lines increases their migratory ability and inhibits collagen type I expression. May act as a negative regulator of collagen matrix deposition. This is Collagen triple helix repeat-containing protein 1 (Cthrc1) from Rattus norvegicus (Rat).